Consider the following 290-residue polypeptide: Small ribosomal subunit biogenesis GTPase RsgA (290 aa).

Positions 61–218 constitute a CP-type G domain; sequence SSELLRPAVA…IVDTPGFSTL (158 aa). Residues 110–113 and 161–169 contribute to the GTP site; these read NKVD and GPSGAGKST. Zn(2+) contacts are provided by Cys243, Cys248, His250, and Cys256.

It belongs to the TRAFAC class YlqF/YawG GTPase family. RsgA subfamily. As to quaternary structure, monomer. Associates with 30S ribosomal subunit, binds 16S rRNA. Requires Zn(2+) as cofactor.

It localises to the cytoplasm. Its function is as follows. One of several proteins that assist in the late maturation steps of the functional core of the 30S ribosomal subunit. Helps release RbfA from mature subunits. May play a role in the assembly of ribosomal proteins into the subunit. Circularly permuted GTPase that catalyzes slow GTP hydrolysis, GTPase activity is stimulated by the 30S ribosomal subunit. The polypeptide is Small ribosomal subunit biogenesis GTPase RsgA (Clostridium botulinum (strain Eklund 17B / Type B)).